We begin with the raw amino-acid sequence, 676 residues long: A-type ATP synthase subunit I (676 aa).

8 helical membrane passes run 341 to 361 (VFIAIFFPIFFGMMLGDIGYG), 390 to 410 (AGVMSIIFGFIYGECFGPFIV), 449 to 469 (ILLFATIVIGIAKILFGFALG), 490 to 510 (IIGVLGLAMIIFGFAYNVGVF), 538 to 558 (LNVYYLAALPLLVVWFILFVM), 564 to 584 (MGAMGVILAVELLTWFGQIMS), 590 to 610 (AIGLSSVYIAFVINFIGMKLI), and 617 to 637 (IPIVGAIVLLIGHVGNLILGI).

The protein belongs to the V-ATPase 116 kDa subunit family. As to quaternary structure, has multiple subunits with at least A(3), B(3), C, D, E, F, H, I and proteolipid K(x).

The protein resides in the cell membrane. Functionally, component of the A-type ATP synthase that produces ATP from ADP in the presence of a proton gradient across the membrane. This is A-type ATP synthase subunit I from Archaeoglobus fulgidus (strain ATCC 49558 / DSM 4304 / JCM 9628 / NBRC 100126 / VC-16).